The primary structure comprises 139 residues: MGSNSLSMIKVRLQNLFDNDEVALLKITCYTDKLIHLTNALAKAVIHTIKLNGIVFVHVITSSDICPNNNIVVKSNFTTMPALQNGGYIWEMMELTHCSQPNGLIDDNCEIKFSKKLSDSTMTNYMNQLSELLGFDLNP.

The short motif at 136-139 (DLNP) is the DLNP; interaction with MAP1B element.

The protein belongs to the pneumovirus non-structural protein 1 family. Monomer. Homomultimer. Heteromultimer with NS2. Interacts with the matrix protein M. Interacts with host ELOC and CUL2; this interaction allows NS1 to form an active E3 ligase with ELOC and CUL2. Interacts with host IRF3; this interaction leads to the disrupted association of IRF3 with CREBBP and thus reduced binding of IRF3 to the IFN-beta promoter. Interacts with host MAVS; this interaction prevents MAVS binding to RIGI and inhibits signaling pathway leading to interferon production. Interacts with host MAP1B/microtubule-associated protein 1B. Interacts with host TRIM25 (via SPRY domain); this interaction suppresses RIGI ubiquitination and results in decreased interaction between RIGI and MAVS.

It is found in the host cytoplasm. The protein localises to the host mitochondrion. The protein resides in the host nucleus. Functionally, plays a major role in antagonizing the type I IFN-mediated antiviral response by degrading or inhibiting multiple cellular factors required for either IFN induction or response pathways. Acts cooperatively with NS2 to repress activation and nuclear translocation of host IFN-regulatory factor IRF3. Also disrupts the association of IRF3 with CREBBP. Interacts with host mitochondrial-associated membrane (MAM) MAVS and prevents the interaction with RIGI. Interacts with TRIM25 to suppress TRIM25-mediated RIGI ubiquitination and thereby RIGI-MAVS interaction. Together with NS2, participates in the proteasomal degradation of host STAT2, IRF3, IRF7, TBK1 and RIGI through a NS-degradasome involving CUL2 and Elongin-C. The degradasome requires an intact mitochondrial MAVS. Decreases the levels of host TRAF3 and IKBKE/IKK-epsilon. As functions other than disruptions of the type I IFN-mediated antiviral signaling pathways, induces host SOCS1 and SOCS3 expression. Suppresses premature apoptosis by an NF-kappa-B-dependent, interferon-independent mechanism and thus facilitates virus growth. Additionally, NS1 may serve some inhibitory role in viral transcription and RNA replication. Suppresses proliferation and activation of host CD103+ CD8+ cytotoxic T-lymphocytes and Th17 helper T-lymphocytes. This chain is Non-structural protein 1 (1C), found in Homo sapiens (Human).